The primary structure comprises 112 residues: uncharacterized protein (112 aa).

This is an uncharacterized protein from Bacillus subtilis (strain 168).